The primary structure comprises 341 residues: Tryptophan--tRNA ligase (341 aa).

Residues 11-13 (RPT) and 19-20 (GH) each bind ATP. Positions 12–20 (PTGKLHIGH) match the 'HIGH' region motif. An L-tryptophan-binding site is contributed by Asp140. Residues 152 to 154 (GTD), Leu194, and 202 to 206 (KMSKS) contribute to the ATP site. The 'KMSKS' region signature appears at 202 to 206 (KMSKS).

This sequence belongs to the class-I aminoacyl-tRNA synthetase family. As to quaternary structure, homodimer.

Its subcellular location is the cytoplasm. It catalyses the reaction tRNA(Trp) + L-tryptophan + ATP = L-tryptophyl-tRNA(Trp) + AMP + diphosphate + H(+). In terms of biological role, catalyzes the attachment of tryptophan to tRNA(Trp). In Streptococcus agalactiae serotype III (strain NEM316), this protein is Tryptophan--tRNA ligase.